Here is a 388-residue protein sequence, read N- to C-terminus: MAFPRTLAILAAAAALVVACSHGGTPTGSSTTSGASPATPVAVPVPRSCAEPAGIPALLSPRDKLAQLLVVGVRDAADAQAVVTNYHVGGILIGSDTDLTIFDGALAEIVAGGGPLPLAVSVDEEGGRLSRLRSLIGGTGPSARELAQTRTVQQVRDLARDRGRQMRKLGITIDFAPVVDVTDAPDDTVIGDRSFGSDPATVTAYAGAYAQGLRDAGVLPVLKHFPGHGRGSGDSHNGGVTTPPLDDLVGDDLVPYRTLVTQAPVGVMVGHLQVPGLTGSEPASLSKAAVNLLRTGTGYGAPPFDGPVFSDDLSGMAAISDRFGVSEAVLRTLQAGADIALWVTTKEVPAVLDRLEQALRAGELPMSAVDRSVVRVATMKGPNPGCGR.

The signal sequence occupies residues 1–19 (MAFPRTLAILAAAAALVVA). The N-palmitoyl cysteine moiety is linked to residue cysteine 20. The S-diacylglycerol cysteine moiety is linked to residue cysteine 20. Substrate contacts are provided by residues aspartate 123, arginine 131, arginine 193, and 223-224 (KH). Catalysis depends on histidine 236, which acts as the Proton donor/acceptor. The active-site Nucleophile is the aspartate 311.

This sequence belongs to the glycosyl hydrolase 3 family.

The protein resides in the cell inner membrane. It carries out the reaction Hydrolysis of terminal non-reducing N-acetyl-D-hexosamine residues in N-acetyl-beta-D-hexosaminides.. It functions in the pathway cell wall biogenesis; peptidoglycan recycling. Plays a role in peptidoglycan recycling by cleaving the terminal beta-1,4-linked N-acetylglucosamine (GlcNAc) from peptidoglycan fragments. Acts as a regulator for GlcNAc-MurNAc levels by cleaving disaccharides and allowing the breakdown of MurNAc. The protein is Beta-hexosaminidase LpqI of Mycobacterium bovis (strain BCG / Pasteur 1173P2).